The following is a 409-amino-acid chain: Elongation factor Tu (409 aa).

Positions 10–214 constitute a tr-type G domain; that stretch reads KPHVNIGTIG…EVDAYIPTPE (205 aa). The tract at residues 19-26 is G1; it reads GHVDHGKT. A GTP-binding site is contributed by 19-26; the sequence is GHVDHGKT. Threonine 26 contacts Mg(2+). The tract at residues 60-64 is G2; sequence GITIN. The segment at 81–84 is G3; it reads DCPG. GTP contacts are provided by residues 81-85 and 136-139; these read DCPGH and NKQD. The interval 136–139 is G4; it reads NKQD. The tract at residues 174–176 is G5; that stretch reads SAL.

Belongs to the TRAFAC class translation factor GTPase superfamily. Classic translation factor GTPase family. EF-Tu/EF-1A subfamily. As to quaternary structure, monomer.

The protein resides in the cytoplasm. It catalyses the reaction GTP + H2O = GDP + phosphate + H(+). Functionally, GTP hydrolase that promotes the GTP-dependent binding of aminoacyl-tRNA to the A-site of ribosomes during protein biosynthesis. The chain is Elongation factor Tu from Acaryochloris marina (strain MBIC 11017).